Here is a 201-residue protein sequence, read N- to C-terminus: Glutathione peroxidase 1 (201 aa).

Ser-32 is modified (phosphoserine). The active site involves Sec-47. A non-standard amino acid (selenocysteine) is located at residue Sec-47. 3 positions are modified to N6-acetyllysine; alternate: Lys-86, Lys-112, and Lys-146. Lys-86, Lys-112, and Lys-146 each carry N6-succinyllysine; alternate. Residues Ser-195 and Ser-199 each carry the phosphoserine modification.

It belongs to the glutathione peroxidase family. Homotetramer. Interacts with MIEN1. During periods of oxidative stress, Sec-47 may react with a superoxide radical, irreversibly lose hydroselenide and be converted to dehydroalanine.

The protein resides in the cytoplasm. It localises to the mitochondrion. It catalyses the reaction 2 glutathione + H2O2 = glutathione disulfide + 2 H2O. The enzyme catalyses a hydroperoxy polyunsaturated fatty acid + 2 glutathione = a hydroxy polyunsaturated fatty acid + glutathione disulfide + H2O. It carries out the reaction tert-butyl hydroperoxide + 2 glutathione = tert-butanol + glutathione disulfide + H2O. The catalysed reaction is cumene hydroperoxide + 2 glutathione = 2-phenylpropan-2-ol + glutathione disulfide + H2O. It catalyses the reaction (13S)-hydroperoxy-(9Z,11E)-octadecadienoate + 2 glutathione = (13S)-hydroxy-(9Z,11E)-octadecadienoate + glutathione disulfide + H2O. The enzyme catalyses (9S)-hydroperoxy-(10E,12Z)-octadecadienoate + 2 glutathione = (9S)-hydroxy-(10E,12Z)-octadecadienoate + glutathione disulfide + H2O. It carries out the reaction (5S)-hydroperoxy-(6E,8Z,11Z,14Z)-eicosatetraenoate + 2 glutathione = (5S)-hydroxy-(6E,8Z,11Z,14Z)-eicosatetraenoate + glutathione disulfide + H2O. The catalysed reaction is (12S)-hydroperoxy-(5Z,8Z,10E,14Z)-eicosatetraenoate + 2 glutathione = (12S)-hydroxy-(5Z,8Z,10E,14Z)-eicosatetraenoate + glutathione disulfide + H2O. It catalyses the reaction (12R)-hydroperoxy-(5Z,8Z,10E,14Z)-eicosatetraenoate + 2 glutathione = (12R)-hydroxy-(5Z,8Z,10E,14Z)-eicosatetraenoate + glutathione disulfide + H2O. The enzyme catalyses (15S)-hydroperoxy-(5Z,8Z,11Z,13E)-eicosatetraenoate + 2 glutathione = (15S)-hydroxy-(5Z,8Z,11Z,13E)-eicosatetraenoate + glutathione disulfide + H2O. It carries out the reaction (5S)-hydroperoxy-(6E,8Z,11Z,14Z,17Z)-eicosapentaenoate + 2 glutathione = (5S)-hydroxy-(6E,8Z,11Z,14Z,17Z)-eicosapentaenoate + glutathione disulfide + H2O. The catalysed reaction is (12S)-hydroperoxy-(5Z,8Z,10E,14Z,17Z)-eicosapentaenoate + 2 glutathione = (12S)-hydroxy-(5Z,8Z,10E,14Z,17Z)-eicosapentaenoate + glutathione disulfide + H2O. It catalyses the reaction (15S)-hydroperoxy-(5Z,8Z,11Z,13E,17Z)-eicosapentaenoate + 2 glutathione = (15S)-hydroxy-(5Z,8Z,11Z,13E,17Z)-eicosapentaenoate + glutathione disulfide + H2O. The enzyme catalyses (15S)-hydroperoxy-(11Z,13E)-eicosadienoate + 2 glutathione = (15S)-hydroxy-(11Z,13E)-eicosadienoate + glutathione disulfide + H2O. It carries out the reaction (17S)-hydroperoxy-(4Z,7Z,10Z,13Z,15E,19Z)-docosahexaenoate + 2 glutathione = (17S)-hydroxy-(4Z,7Z,10Z,13Z,15E,19Z)-docosahexaenoate + glutathione disulfide + H2O. In terms of biological role, catalyzes the reduction of hydroperoxides in a glutathione-dependent manner thus regulating cellular redox homeostasis. Can reduce small soluble hydroperoxides such as H2O2, cumene hydroperoxide and tert-butyl hydroperoxide, as well as several fatty acid-derived hydroperoxides. In platelets catalyzes the reduction of 12-hydroperoxyeicosatetraenoic acid, the primary product of the arachidonate 12-lipoxygenase pathway. In Macaca fuscata fuscata (Japanese macaque), this protein is Glutathione peroxidase 1 (GPX1).